The primary structure comprises 347 residues: UDP-N-acetylenolpyruvoylglucosamine reductase (347 aa).

The region spanning 17 to 187 (IEQLAAQLVV…TAVGLKFAKA (171 aa)) is the FAD-binding PCMH-type domain. Arginine 163 is an active-site residue. The active-site Proton donor is serine 232. Residue glutamate 327 is part of the active site.

The protein belongs to the MurB family. It depends on FAD as a cofactor.

The protein resides in the cytoplasm. The catalysed reaction is UDP-N-acetyl-alpha-D-muramate + NADP(+) = UDP-N-acetyl-3-O-(1-carboxyvinyl)-alpha-D-glucosamine + NADPH + H(+). Its pathway is cell wall biogenesis; peptidoglycan biosynthesis. Functionally, cell wall formation. The chain is UDP-N-acetylenolpyruvoylglucosamine reductase from Vibrio cholerae serotype O1 (strain ATCC 39315 / El Tor Inaba N16961).